Here is a 66-residue protein sequence, read N- to C-terminus: Large ribosomal subunit protein bL33c (66 aa).

Belongs to the bacterial ribosomal protein bL33 family.

The protein resides in the plastid. It is found in the chloroplast. This is Large ribosomal subunit protein bL33c from Nicotiana sylvestris (Wood tobacco).